The primary structure comprises 565 residues: NAD-dependent malic enzyme (565 aa).

Tyrosine 104 functions as the Proton donor in the catalytic mechanism. Arginine 157 lines the NAD(+) pocket. Catalysis depends on lysine 175, which acts as the Proton acceptor. Positions 246, 247, and 270 each coordinate a divalent metal cation. Residues aspartate 270 and asparagine 418 each contribute to the NAD(+) site.

This sequence belongs to the malic enzymes family. In terms of assembly, homotetramer. Mg(2+) is required as a cofactor. The cofactor is Mn(2+).

It carries out the reaction (S)-malate + NAD(+) = pyruvate + CO2 + NADH. The catalysed reaction is oxaloacetate + H(+) = pyruvate + CO2. This Escherichia coli (strain K12 / MC4100 / BW2952) protein is NAD-dependent malic enzyme.